Reading from the N-terminus, the 423-residue chain is Imidazolonepropionase (423 aa).

Residues H78 and H80 each coordinate Fe(3+). Zn(2+)-binding residues include H78 and H80. The 4-imidazolone-5-propanoate site is built by R87, Y150, and H183. Y150 provides a ligand contact to N-formimidoyl-L-glutamate. H247 lines the Fe(3+) pocket. H247 serves as a coordination point for Zn(2+). E250 provides a ligand contact to 4-imidazolone-5-propanoate. D322 contacts Fe(3+). Position 322 (D322) interacts with Zn(2+). Positions 324 and 326 each coordinate N-formimidoyl-L-glutamate. Residue S327 participates in 4-imidazolone-5-propanoate binding.

The protein belongs to the metallo-dependent hydrolases superfamily. HutI family. The cofactor is Zn(2+). Requires Fe(3+) as cofactor.

It is found in the cytoplasm. The catalysed reaction is 4-imidazolone-5-propanoate + H2O = N-formimidoyl-L-glutamate. The protein operates within amino-acid degradation; L-histidine degradation into L-glutamate; N-formimidoyl-L-glutamate from L-histidine: step 3/3. Functionally, catalyzes the hydrolytic cleavage of the carbon-nitrogen bond in imidazolone-5-propanoate to yield N-formimidoyl-L-glutamate. It is the third step in the universal histidine degradation pathway. In Bacillus cereus (strain B4264), this protein is Imidazolonepropionase.